The following is a 426-amino-acid chain: 3-phosphoshikimate 1-carboxyvinyltransferase (426 aa).

The 3-phosphoshikimate site is built by lysine 23, serine 24, and arginine 28. Lysine 23 is a phosphoenolpyruvate binding site. Positions 96 and 124 each coordinate phosphoenolpyruvate. 3-phosphoshikimate is bound by residues threonine 170, serine 171, glutamine 172, serine 198, aspartate 314, and lysine 341. Glutamine 172 contacts phosphoenolpyruvate. Aspartate 314 functions as the Proton acceptor in the catalytic mechanism. The phosphoenolpyruvate site is built by arginine 345, arginine 386, and lysine 411.

The protein belongs to the EPSP synthase family. In terms of assembly, monomer.

It is found in the cytoplasm. The catalysed reaction is 3-phosphoshikimate + phosphoenolpyruvate = 5-O-(1-carboxyvinyl)-3-phosphoshikimate + phosphate. It participates in metabolic intermediate biosynthesis; chorismate biosynthesis; chorismate from D-erythrose 4-phosphate and phosphoenolpyruvate: step 6/7. In terms of biological role, catalyzes the transfer of the enolpyruvyl moiety of phosphoenolpyruvate (PEP) to the 5-hydroxyl of shikimate-3-phosphate (S3P) to produce enolpyruvyl shikimate-3-phosphate and inorganic phosphate. The protein is 3-phosphoshikimate 1-carboxyvinyltransferase of Nostoc punctiforme (strain ATCC 29133 / PCC 73102).